Reading from the N-terminus, the 422-residue chain is Dihydroorotase (422 aa).

Residues His-57 and His-59 each contribute to the Zn(2+) site. Residues 59-61 (HLR) and Asn-91 each bind substrate. 3 residues coordinate Zn(2+): Asp-149, His-176, and His-229. Asn-275 is a binding site for substrate. Asp-302 is a Zn(2+) binding site. Asp-302 is an active-site residue. Substrate-binding positions include His-306 and 320–321 (FG).

This sequence belongs to the metallo-dependent hydrolases superfamily. DHOase family. Class I DHOase subfamily. The cofactor is Zn(2+).

It carries out the reaction (S)-dihydroorotate + H2O = N-carbamoyl-L-aspartate + H(+). It functions in the pathway pyrimidine metabolism; UMP biosynthesis via de novo pathway; (S)-dihydroorotate from bicarbonate: step 3/3. Its function is as follows. Catalyzes the reversible cyclization of carbamoyl aspartate to dihydroorotate. The polypeptide is Dihydroorotase (Endomicrobium trichonymphae).